We begin with the raw amino-acid sequence, 164 residues long: CDP-archaeol synthase (164 aa).

The next 4 helical transmembrane spans lie at 3 to 23 (LFVF…AVLA), 53 to 73 (GLAI…LLHP), 77 to 97 (LLDA…GAFI), and 126 to 146 (SLYA…TPII).

This sequence belongs to the CDP-archaeol synthase family. Requires Mg(2+) as cofactor.

The protein localises to the cell membrane. The catalysed reaction is 2,3-bis-O-(geranylgeranyl)-sn-glycerol 1-phosphate + CTP + H(+) = CDP-2,3-bis-O-(geranylgeranyl)-sn-glycerol + diphosphate. It functions in the pathway membrane lipid metabolism; glycerophospholipid metabolism. Catalyzes the formation of CDP-2,3-bis-(O-geranylgeranyl)-sn-glycerol (CDP-archaeol) from 2,3-bis-(O-geranylgeranyl)-sn-glycerol 1-phosphate (DGGGP) and CTP. This reaction is the third ether-bond-formation step in the biosynthesis of archaeal membrane lipids. In Pyrobaculum arsenaticum (strain DSM 13514 / JCM 11321 / PZ6), this protein is CDP-archaeol synthase.